We begin with the raw amino-acid sequence, 477 residues long: Ribulose bisphosphate carboxylase large chain (477 aa).

The propeptide occupies 1–2 (MS). Proline 3 carries the N-acetylproline modification. Substrate-binding residues include asparagine 123 and threonine 173. Residue lysine 175 is the Proton acceptor of the active site. Residue lysine 177 participates in substrate binding. Mg(2+)-binding residues include lysine 201, aspartate 203, and glutamate 204. N6-carboxylysine is present on lysine 201. Histidine 294 functions as the Proton acceptor in the catalytic mechanism. Substrate is bound by residues arginine 295, histidine 327, and serine 379.

Belongs to the RuBisCO large chain family. Type I subfamily. Heterohexadecamer of 8 large chains and 8 small chains; disulfide-linked. The disulfide link is formed within the large subunit homodimers. Requires Mg(2+) as cofactor. The disulfide bond which can form between Cys-247 in the large chain dimeric partners within the hexadecamer appears to be associated with oxidative stress and protein turnover.

It localises to the plastid. Its subcellular location is the chloroplast. The enzyme catalyses 2 (2R)-3-phosphoglycerate + 2 H(+) = D-ribulose 1,5-bisphosphate + CO2 + H2O. It catalyses the reaction D-ribulose 1,5-bisphosphate + O2 = 2-phosphoglycolate + (2R)-3-phosphoglycerate + 2 H(+). Functionally, ruBisCO catalyzes two reactions: the carboxylation of D-ribulose 1,5-bisphosphate, the primary event in carbon dioxide fixation, as well as the oxidative fragmentation of the pentose substrate in the photorespiration process. Both reactions occur simultaneously and in competition at the same active site. This chain is Ribulose bisphosphate carboxylase large chain (rbcL), found in Triticum aestivum (Wheat).